The chain runs to 82 residues: UPF0213 protein SSP2268 (82 aa).

In terms of domain architecture, GIY-YIG spans 2–77 (DKHYIYIVKC…KTFSRQKKLK (76 aa)).

It belongs to the UPF0213 family.

This Staphylococcus saprophyticus subsp. saprophyticus (strain ATCC 15305 / DSM 20229 / NCIMB 8711 / NCTC 7292 / S-41) protein is UPF0213 protein SSP2268.